The primary structure comprises 275 residues: Shikimate dehydrogenase (NADP(+)) (275 aa).

Shikimate is bound by residues 16-18 and T63; that span reads SKS. K67 acts as the Proton acceptor in catalysis. The shikimate site is built by N88 and D104. Residues 129 to 133, 153 to 158, and M219 each bind NADP(+); these read GAGGA and NRTVAR. Y221 serves as a coordination point for shikimate. G243 contributes to the NADP(+) binding site.

It belongs to the shikimate dehydrogenase family. As to quaternary structure, homodimer.

It catalyses the reaction shikimate + NADP(+) = 3-dehydroshikimate + NADPH + H(+). It participates in metabolic intermediate biosynthesis; chorismate biosynthesis; chorismate from D-erythrose 4-phosphate and phosphoenolpyruvate: step 4/7. In terms of biological role, involved in the biosynthesis of the chorismate, which leads to the biosynthesis of aromatic amino acids. Catalyzes the reversible NADPH linked reduction of 3-dehydroshikimate (DHSA) to yield shikimate (SA). This Marinobacter nauticus (strain ATCC 700491 / DSM 11845 / VT8) (Marinobacter aquaeolei) protein is Shikimate dehydrogenase (NADP(+)).